Reading from the N-terminus, the 133-residue chain is Small ribosomal subunit protein uS8 (133 aa).

The protein belongs to the universal ribosomal protein uS8 family. As to quaternary structure, part of the 30S ribosomal subunit. Contacts proteins S5 and S12.

Its function is as follows. One of the primary rRNA binding proteins, it binds directly to 16S rRNA central domain where it helps coordinate assembly of the platform of the 30S subunit. This chain is Small ribosomal subunit protein uS8, found in Prochlorococcus marinus (strain AS9601).